Reading from the N-terminus, the 111-residue chain is Cytochrome c (111 aa).

Alanine 1 carries the N-acetylalanine modification. Heme c contacts are provided by cysteine 22, cysteine 25, and histidine 26. Lysine 80 is subject to N6,N6,N6-trimethyllysine. Methionine 88 contacts heme c. Lysine 94 carries the post-translational modification N6,N6,N6-trimethyllysine.

The protein belongs to the cytochrome c family. In terms of processing, binds 1 heme c group covalently per subunit.

The protein localises to the mitochondrion intermembrane space. Functionally, electron carrier protein. The oxidized form of the cytochrome c heme group can accept an electron from the heme group of the cytochrome c1 subunit of cytochrome reductase. Cytochrome c then transfers this electron to the cytochrome oxidase complex, the final protein carrier in the mitochondrial electron-transport chain. This chain is Cytochrome c, found in Gossypium barbadense (Sea Island cotton).